We begin with the raw amino-acid sequence, 650 residues long: Putative pumilio homolog 7, chloroplastic (650 aa).

Disordered stretches follow at residues 1–22 and 200–235; these read MDEF…RTPL and NDDK…GQEI. The transit peptide at 1-77 directs the protein to the chloroplast; sequence MDEFREASSV…SPPFNGIIPK (77 aa). Composition is skewed to low complexity over residues 8–22 and 217–232; these read SSVS…RTPL and PSYS…YNNG. In terms of domain architecture, PUM-HD spans 308-650; it reads SNTRALMSNN…RIFSRNLLKK (343 aa). Pumilio repeat units follow at residues 333–368, 369–404, 408–443, 445–480, 481–516, 517–552, 553–591, and 594–625; these read DIQG…IIFN, EVIA…QIVL, EEPG…SLVK, ALRP…FIFD, AATK…KLIA, EISR…MMLA, QLKG…ELVS, and HFDQ…SLVE.

It localises to the plastid. The protein resides in the chloroplast. It is found in the cytoplasm. In terms of biological role, sequence-specific RNA-binding protein that regulates translation and mRNA stability by binding the 3'-UTR of target mRNAs. The sequence is that of Putative pumilio homolog 7, chloroplastic (APUM7) from Arabidopsis thaliana (Mouse-ear cress).